The following is a 163-amino-acid chain: S-ribosylhomocysteine lyase (163 aa).

Fe cation is bound by residues H54, H58, and C128.

Belongs to the LuxS family. Homodimer. Fe cation is required as a cofactor.

The catalysed reaction is S-(5-deoxy-D-ribos-5-yl)-L-homocysteine = (S)-4,5-dihydroxypentane-2,3-dione + L-homocysteine. In terms of biological role, involved in the synthesis of autoinducer 2 (AI-2) which is secreted by bacteria and is used to communicate both the cell density and the metabolic potential of the environment. The regulation of gene expression in response to changes in cell density is called quorum sensing. Catalyzes the transformation of S-ribosylhomocysteine (RHC) to homocysteine (HC) and 4,5-dihydroxy-2,3-pentadione (DPD). This is S-ribosylhomocysteine lyase from Wolinella succinogenes (strain ATCC 29543 / DSM 1740 / CCUG 13145 / JCM 31913 / LMG 7466 / NCTC 11488 / FDC 602W) (Vibrio succinogenes).